Consider the following 338-residue polypeptide: Anthranilate phosphoribosyltransferase (338 aa).

Residues Gly78, 81–82 (GD), Ser86, 88–91 (NIST), 106–114 (KHGNKSVTS), and Ser118 contribute to the 5-phospho-alpha-D-ribose 1-diphosphate site. Position 78 (Gly78) interacts with anthranilate. Ser90 contacts Mg(2+). Asn109 is a binding site for anthranilate. Residue Arg163 coordinates anthranilate. Asp222 and Glu223 together coordinate Mg(2+).

It belongs to the anthranilate phosphoribosyltransferase family. In terms of assembly, homodimer. Mg(2+) serves as cofactor.

It catalyses the reaction N-(5-phospho-beta-D-ribosyl)anthranilate + diphosphate = 5-phospho-alpha-D-ribose 1-diphosphate + anthranilate. Its pathway is amino-acid biosynthesis; L-tryptophan biosynthesis; L-tryptophan from chorismate: step 2/5. Catalyzes the transfer of the phosphoribosyl group of 5-phosphorylribose-1-pyrophosphate (PRPP) to anthranilate to yield N-(5'-phosphoribosyl)-anthranilate (PRA). The chain is Anthranilate phosphoribosyltransferase from Staphylococcus saprophyticus subsp. saprophyticus (strain ATCC 15305 / DSM 20229 / NCIMB 8711 / NCTC 7292 / S-41).